A 412-amino-acid chain; its full sequence is MTLRRRGEKATISIQEHMAIDVCPGPIRPIKQISDYFPRFPRGLPPTAAPRASAPPDAPARSPAATAGPRSPSDGARDDDEDVDQLFGAYGASPGPSPGPSPVRPPAKPPEDEPDADGYESDDCTALGTLDFSLLYDQENNALHCTISKAKGLKPMDHNGLADPYVKLHLLPGASKANKLRTKTLRNTLNPSWNETLTYYGITDEDMIRKTLRISVCDEDKFRHNEFIGETRVPLKKLKPNHTKTFSICLEKQLPVDKAEDKSLEERGRILISLKYSSQKQGLLVGIVRCAHLAAMDANGYSDPYVKTYLKPDVDKKSKHKTAVKKKTLNPEFNEEFCYEIKHGDLAKKTLEVTVWDYDIGKSNDFIGGVVLGINAKGERLKHWFDCLKNKDKRIERWHTLTNEIPGAVLSD.

A negatively regulates targeting to plasma membrane region spans residues 1–36; the sequence is MTLRRRGEKATISIQEHMAIDVCPGPIRPIKQISDY. The segment at 1 to 90 is mediates interaction with DYNLT1; the sequence is MTLRRRGEKA…EDVDQLFGAY (90 aa). The disordered stretch occupies residues 38 to 123; that stretch reads PRFPRGLPPT…PDADGYESDD (86 aa). Residues 49 to 73 are compositionally biased toward low complexity; it reads APRASAPPDAPARSPAATAGPRSPS. Residues 95–108 are compositionally biased toward pro residues; it reads GPSPGPSPVRPPAK. Acidic residues predominate over residues 112 to 123; sequence DEPDADGYESDD. C2 domains are found at residues 126–250 and 266–399; these read ALGT…SICL and ERGR…ERWH. 9 residues coordinate Ca(2+): Asp157, Asp163, Asp218, Asp220, Asp297, Asp303, Asp357, Asp359, and Asp365. A mediates interaction with STXBP3 region spans residues 257 to 375; sequence DKAEDKSLEE…FIGGVVLGIN (119 aa). Position 411 is a phosphoserine (Ser411).

Interacts with STX4; the interaction is calcium-dependent, increased by insulin and glucose, and mediates vesicle fusion with plasma membrane in pancreatic cells and adipocytes. Interacts with STXBP3; the interaction is direct, occurs at the cell membrane and regulates glucose-stimulated insulin secretion. Interacts with cytoplasmic dynein light chain DYNLT1. Interacts with the SNARE (soluble N-ethylmaleimide-sensitive factor attached protein receptor) complex composed of SNAP25, STX1A and VAMP2; the interaction is calcium-dependent and competitive with SYT1. May interact with UNC13A; the interaction mediates targeting to the plasma membrane. Requires Ca(2+) as cofactor. Expressed in brain; highly enriched in neurons.

It localises to the cytoplasm. Its subcellular location is the cytoplasmic granule. It is found in the cell membrane. Calcium sensor which positively regulates SNARE-dependent fusion of vesicles with membranes. Binds phospholipids in a calcium-dependent manner and may act at the priming stage of fusion by modifying membrane curvature to stimulate fusion. Involved in calcium-triggered exocytosis in chromaffin cells and calcium-dependent spontaneous release of neurotransmitter in absence of action potentials in neuronal cells. Involved both in glucose-stimulated insulin secretion in pancreatic cells and insulin-dependent GLUT4 transport to the plasma membrane in adipocytes. This is Double C2-like domain-containing protein beta (Doc2b) from Rattus norvegicus (Rat).